The following is a 613-amino-acid chain: Probable Xaa-Pro aminopeptidase P (613 aa).

Mn(2+)-binding residues include Asp408, Asp419, Glu517, and Glu531.

It belongs to the peptidase M24B family. Mn(2+) is required as a cofactor.

It catalyses the reaction Release of any N-terminal amino acid, including proline, that is linked to proline, even from a dipeptide or tripeptide.. Its function is as follows. Catalyzes the removal of a penultimate prolyl residue from the N-termini of peptides. The polypeptide is Probable Xaa-Pro aminopeptidase P (ampp) (Penicillium rubens (strain ATCC 28089 / DSM 1075 / NRRL 1951 / Wisconsin 54-1255) (Penicillium chrysogenum)).